We begin with the raw amino-acid sequence, 235 residues long: Enolase-phosphatase E1 (235 aa).

Belongs to the HAD-like hydrolase superfamily. MasA/MtnC family. As to quaternary structure, monomer. Mg(2+) serves as cofactor.

The enzyme catalyses 5-methylsulfanyl-2,3-dioxopentyl phosphate + H2O = 1,2-dihydroxy-5-(methylsulfanyl)pent-1-en-3-one + phosphate. The protein operates within amino-acid biosynthesis; L-methionine biosynthesis via salvage pathway; L-methionine from S-methyl-5-thio-alpha-D-ribose 1-phosphate: step 3/6. It participates in amino-acid biosynthesis; L-methionine biosynthesis via salvage pathway; L-methionine from S-methyl-5-thio-alpha-D-ribose 1-phosphate: step 4/6. Bifunctional enzyme that catalyzes the enolization of 2,3-diketo-5-methylthiopentyl-1-phosphate (DK-MTP-1-P) into the intermediate 2-hydroxy-3-keto-5-methylthiopentenyl-1-phosphate (HK-MTPenyl-1-P), which is then dephosphorylated to form the acireductone 1,2-dihydroxy-3-keto-5-methylthiopentene (DHK-MTPene). This chain is Enolase-phosphatase E1, found in Parvibaculum lavamentivorans (strain DS-1 / DSM 13023 / NCIMB 13966).